A 220-amino-acid polypeptide reads, in one-letter code: Response regulator protein TmoT (220 aa).

The region spanning 21-135 is the Response regulatory domain; the sequence is VIYIVDDDNA…DLLGAIRTAL (115 aa). Aspartate 70 carries the 4-aspartylphosphate modification. Residues 151–216 form the HTH luxR-type domain; it reads LKASYESLSK…DLVRVTERLK (66 aa). Positions 175 to 194 form a DNA-binding region, H-T-H motif; sequence NKQTALELDISEATVKVHRH.

Post-translationally, phosphorylated by TmoS.

The protein localises to the cytoplasm. In terms of biological role, member of the two-component regulatory system TmoS/TmoT involved in the regulation of toluene degradation. Induces expression of tmoX operon. This chain is Response regulator protein TmoT (tmoT), found in Ectopseudomonas mendocina (Pseudomonas mendocina).